The chain runs to 117 residues: Large ribosomal subunit protein bL17 (117 aa).

The protein belongs to the bacterial ribosomal protein bL17 family. Part of the 50S ribosomal subunit. Contacts protein L32.

The protein is Large ribosomal subunit protein bL17 of Dehalococcoides mccartyi (strain ATCC BAA-2100 / JCM 16839 / KCTC 5957 / BAV1).